Here is a 1663-residue protein sequence, read N- to C-terminus: MATDGASCEPDLSRAPEDAAGATAEAAKKEFDVDTLSKSELRMLLSVMEGELEARDLVIEALRARRKEVFIQERYGRFNLNDPFLALQRDYEAGAGDKEKKPVCTNPLSILEAVMAHCRKMQERMSAQLAAAESRQKKLEMEKLQLQALEQEHKKLAARLEEERGKNKQVVLMLVKECKQLSGRVIEEAQKLKDVMAKLEEEKKKTNELEEELSAEKQRSTEMEAQMEKQLSEFDTEREQLRAKLNREEAHTTDLKEEIDKMKKMIEQLKKGGDSKPSLSLPRKTKDRRLVSISVGTEGTVTRSVACQTDLVTESADHVKKLPLTMPVKPSTGSPLASANAKGSVCTSAAMARPSIDRQPSHGDLIGVSVPAFPPSSANRIEENGPSTDSTPDPTSSTPLLSSNAAPPTAQTPGITPQNSQAPPMHSLHSPCANASLHPGLNPRIQAARFRFQGNANDPDQNGNTTQSPPSRDVSPTSRDNLVAKQLARNTVTQALSRFTGPQAGAPPRPGAPPTGDVGTHPSVGRTSVKTHGVARVDRGNPPPIPPKKPGLSQTPSPPHPQLKVIIDSSRASNTGAKGDNKTVASPPSSLPQGNRVINEENLPKSSSPQLPPKPSIDLTVAPAGCAVSALATSQVGAWPAATPGLNQPACSDSSLVIPTTIAFCSSINPVSASSCRPGASDSLLVTASGWSPSLTPLLMSGGPAPLAGRPTLLQQAAAQGNVTLLSMLLNEEGLDINYSCEDGHSALYSAAKNGHTDCVRLLLSAEAQVNAADTNGFTPLCAAAAQGHFECVELLIAYDANINHAAGGGQTPLYLACKNGNKECIKLLLEAGTDRCVKTTDGWTPVHAAVDTGNVDSLKLLMYHRVPAHGNSFSEEESESGVFDLDGEEESPEGKSKPVVTADLINHANREGWTAAHIAAAKGFKNCLEILCRHGGLEPERRDKCNRTVHDVATDDCKHLLENLNALKIPLRISVGEIEPSDYGSDDFECENTICSLNIRKQTSWDDFSKAVNQALTNHFQAISSDGWWSLEDVTCNNTTDSNIGLSARSIRSITLGNVPWSVGESFAQSPWDFMMKNKAEHITVLLSGPQEGCLSSVTYASMIPLQMMQNYLRLVEQYHNVIFHGPEGSLQDYIVHQLALCLKHRQMAAGFSCEIVRAEVDSGFSKKQLLDLFISNACLIPVKQSPVKKKIIIILENLEKSSLSELLRDFLAPLENRSTESPCTFQKGNGMSECYYFHENCFLMGTIAKACLQGSDLLVQQHFRWVQLRWDGEPMQGLLQRFLRRKVVNKFRGQVPPPCDPVCKIVDWALSVWRQLNSCLARLGTPEALLGPKYFLSCPVVPGHAQVTVKWMSKLWNGVITPRVQEAILSRASVKRQPGFGQTTAKRHPSQGQQAVVKAALSILLNKAVLHGCPLPRAELEQHTADFKGGSFPLSIVSSFNSCSKKKGESGAWRKVNTSPRRKSGRFSLPTWNKPDLSTEGIKNKTLSQLNCNRNASLSKQKSVENDVSLTLNLDQRLSLGSDDEADLVKELQSMCSSKSESDISKIADSRDDLRMFNSPGNNPVFSATVNNLRMPVSQKEVCPLSSHQTTECSNSKSKTELGVSRVKSFLPVPRSKVTQCSQNTKSSSSSSNTRQIEINNNSKEENWNLHKNEHLEKANK.

The disordered stretch occupies residues 1–26 (MATDGASCEPDLSRAPEDAAGATAEA). Residues 119–275 (RKMQERMSAQ…IEQLKKGGDS (157 aa)) are a coiled coil. Disordered regions lie at residues 355 to 440 (SIDR…LHPG) and 454 to 478 (GNANDPDQNGNTTQSPPSRDVSPTS). Over residues 386-403 (PSTDSTPDPTSSTPLLSS) the composition is skewed to low complexity. The span at 404-422 (NAAPPTAQTPGITPQNSQA) shows a compositional bias: polar residues. Asymmetric dimethylarginine is present on R498. The disordered stretch occupies residues 499-614 (FTGPQAGAPP…KSSSPQLPPK (116 aa)). Polar residues predominate over residues 583–593 (TVASPPSSLPQ). 5 ANK repeats span residues 709-739 (GRPTLLQQAAAQGNVTLLSMLLNEEGLDINY), 743-772 (DGHSALYSAAKNGHTDCVRLLLSAEAQVNA), 776-805 (NGFTPLCAAAAQGHFECVELLIAYDANINH), 809-838 (GGQTPLYLACKNGNKECIKLLLEAGTDRCV), and 842-871 (DGWTPVHAAVDTGNVDSLKLLMYHRVPAHG). A disordered region spans residues 872-897 (NSFSEEESESGVFDLDGEEESPEGKS). The segment covering 875–892 (SEEESESGVFDLDGEEES) has biased composition (acidic residues). Residues 912 to 942 (EGWTAAHIAAAKGFKNCLEILCRHGGLEPER) form an ANK 6 repeat. Residues 1446–1482 (SKKKGESGAWRKVNTSPRRKSGRFSLPTWNKPDLSTE) form a disordered region. S1524 carries the phosphoserine modification. Residues 1617–1663 (RSKVTQCSQNTKSSSSSSNTRQIEINNNSKEENWNLHKNEHLEKANK) are disordered. 2 stretches are compositionally biased toward polar residues: residues 1619–1628 (KVTQCSQNTK) and 1635–1644 (NTRQIEINNN). Over residues 1645–1663 (SKEENWNLHKNEHLEKANK) the composition is skewed to basic and acidic residues.

In terms of assembly, interacts with CTTN/cortactin SH3 domain. Interacts with STRN, STRN4/zinedin and MOB4/phocein; this interactions mediate the association with the STRIPAK core complex and may regulate dendritic spine distribution of the STRIPAK complex in hippocampal neurons. Activation of glutamate receptors weakens the interaction with STRN and STRN4.

It localises to the cytoplasm. It is found in the cell cortex. Its subcellular location is the cell projection. The protein resides in the dendritic spine. In terms of biological role, regulates the dendritic spine distribution of CTTN/cortactin in hippocampal neurons, and thus controls dendritic spinogenesis and dendritic spine maintenance. Associates with the striatin-interacting phosphatase and kinase (STRIPAK) core complex to regulate dendritic spine distribution of the STRIPAK complex in hippocampal neurons. This is Cortactin-binding protein 2 (CTTNBP2) from Plecturocebus moloch (Dusky titi monkey).